Here is a 527-residue protein sequence, read N- to C-terminus: ATP-dependent RNA helicase DBP3 (527 aa).

Over residues 1 to 11 (MSKDHKDKKRK) the composition is skewed to basic residues. Positions 1–89 (MSKDHKDKKR…TGYSQSPALT (89 aa)) are disordered. Basic and acidic residues predominate over residues 12 to 24 (HSDEATEEVEKKT). A compositionally biased stretch (basic residues) spans 25–44 (KVSKKEKKDKKEKKEKKDKK). A compositionally biased stretch (basic and acidic residues) spans 45-71 (EKKDKSEKKDKSEKKEKKEKKESEDVP). Positions 72–89 (TKSSAVVSTGYSQSPALT) are enriched in polar residues. A Q motif motif is present at residues 119 to 145 (LGFDQIDLDSRIASVISKFPTPTPIQA). The 172-residue stretch at 148–319 (WPYLLSGKDV…STFMNSPVKV (172 aa)) folds into the Helicase ATP-binding domain. 161-168 (AETGSGKT) is an ATP binding site. Positions 266 to 269 (DEAD) match the DEAD box motif. The Helicase C-terminal domain occupies 348 to 497 (KLLSLLRKYQ…PVPDELLKFG (150 aa)).

It belongs to the DEAD box helicase family. DDX5/DBP2 subfamily.

The protein localises to the nucleus. It is found in the nucleolus. It carries out the reaction ATP + H2O = ADP + phosphate + H(+). ATP-dependent RNA helicase required for 60S ribosomal subunit synthesis. Involved in efficient pre-rRNA processing, predominantly at site A3, which is necessary for the normal formation of 25S and 5.8S rRNAs. The sequence is that of ATP-dependent RNA helicase DBP3 (DBP3) from Debaryomyces hansenii (strain ATCC 36239 / CBS 767 / BCRC 21394 / JCM 1990 / NBRC 0083 / IGC 2968) (Yeast).